The chain runs to 160 residues: uncharacterized protein (160 aa).

The signal sequence occupies residues Met1–Ala29.

This is an uncharacterized protein from Sinorhizobium fredii (strain NBRC 101917 / NGR234).